The primary structure comprises 377 residues: tRNA/tmRNA (uracil-C(5))-methyltransferase (377 aa).

S-adenosyl-L-methionine is bound by residues glutamine 199, tyrosine 227, asparagine 232, glutamate 248, and aspartate 308. Cysteine 333 (nucleophile) is an active-site residue. Glutamate 367 acts as the Proton acceptor in catalysis.

Belongs to the class I-like SAM-binding methyltransferase superfamily. RNA M5U methyltransferase family. TrmA subfamily.

It carries out the reaction uridine(54) in tRNA + S-adenosyl-L-methionine = 5-methyluridine(54) in tRNA + S-adenosyl-L-homocysteine + H(+). It catalyses the reaction uridine(341) in tmRNA + S-adenosyl-L-methionine = 5-methyluridine(341) in tmRNA + S-adenosyl-L-homocysteine + H(+). In terms of biological role, dual-specificity methyltransferase that catalyzes the formation of 5-methyluridine at position 54 (m5U54) in all tRNAs, and that of position 341 (m5U341) in tmRNA (transfer-mRNA). This Aeromonas salmonicida (strain A449) protein is tRNA/tmRNA (uracil-C(5))-methyltransferase.